A 662-amino-acid chain; its full sequence is DNA ligase (662 aa).

Residues 31–35 (DKDYD) and 79–80 (SL) each bind NAD(+). Lys-121 functions as the N6-AMP-lysine intermediate in the catalytic mechanism. NAD(+) contacts are provided by Arg-143, Glu-177, and Lys-313. Zn(2+)-binding residues include Cys-406, Cys-409, Cys-422, and Cys-428. In terms of domain architecture, BRCT spans 586 to 662 (VLESPFMGKT…LSEEEFENMI (77 aa)).

It belongs to the NAD-dependent DNA ligase family. LigA subfamily. It depends on Mg(2+) as a cofactor. Mn(2+) serves as cofactor.

It carries out the reaction NAD(+) + (deoxyribonucleotide)n-3'-hydroxyl + 5'-phospho-(deoxyribonucleotide)m = (deoxyribonucleotide)n+m + AMP + beta-nicotinamide D-nucleotide.. Functionally, DNA ligase that catalyzes the formation of phosphodiester linkages between 5'-phosphoryl and 3'-hydroxyl groups in double-stranded DNA using NAD as a coenzyme and as the energy source for the reaction. It is essential for DNA replication and repair of damaged DNA. The protein is DNA ligase of Clostridium perfringens (strain ATCC 13124 / DSM 756 / JCM 1290 / NCIMB 6125 / NCTC 8237 / Type A).